The chain runs to 535 residues: Succinate-semialdehyde dehydrogenase, mitochondrial (535 aa).

The N-terminal 47 residues, 1-47 (MATCFWLRSCGARRLGSTFPGCRLRPRAGGLVPASGPAPGPAQLRCY), are a transit peptide targeting the mitochondrion. The residue at position 126 (Lys-126) is an N6-acetyllysine; alternate. Position 126 is an N6-succinyllysine; alternate (Lys-126). N6-succinyllysine occurs at positions 135 and 184. NAD(+) contacts are provided by residues Arg-213 and 228 to 231 (KPAE). Arg-213 is a binding site for substrate. Lys-265 bears the N6-acetyllysine; alternate mark. Lys-265 bears the N6-succinyllysine; alternate mark. 284–289 (GSTTTG) serves as a coordination point for NAD(+). Catalysis depends on Glu-306, which acts as the Proton acceptor. Arg-334 contacts substrate. Cys-340 (nucleophile) is an active-site residue. Residues Cys-340 and Cys-342 are joined by a disulfide bond. Lys-365 is subject to N6-acetyllysine. An N6-succinyllysine modification is found at Lys-402. Residue Lys-411 is modified to N6-acetyllysine. Ser-498 is a substrate binding site. Ser-499 bears the Phosphoserine mark.

It belongs to the aldehyde dehydrogenase family. As to quaternary structure, homotetramer.

It localises to the mitochondrion. The enzyme catalyses succinate semialdehyde + NAD(+) + H2O = succinate + NADH + 2 H(+). Its pathway is amino-acid degradation; 4-aminobutanoate degradation. With respect to regulation, redox-regulated. Inhibited under oxydizing conditions. In terms of biological role, catalyzes one step in the degradation of the inhibitory neurotransmitter gamma-aminobutyric acid (GABA). The protein is Succinate-semialdehyde dehydrogenase, mitochondrial (ALDH5A1) of Hylobates lar (Lar gibbon).